The chain runs to 440 residues: Methylenetetrahydrofolate--tRNA-(uracil-5-)-methyltransferase TrmFO (440 aa).

Residue 14–19 coordinates FAD; it reads GAGLAG.

The protein belongs to the MnmG family. TrmFO subfamily. The cofactor is FAD.

Its subcellular location is the cytoplasm. It carries out the reaction uridine(54) in tRNA + (6R)-5,10-methylene-5,6,7,8-tetrahydrofolate + NADH + H(+) = 5-methyluridine(54) in tRNA + (6S)-5,6,7,8-tetrahydrofolate + NAD(+). It catalyses the reaction uridine(54) in tRNA + (6R)-5,10-methylene-5,6,7,8-tetrahydrofolate + NADPH + H(+) = 5-methyluridine(54) in tRNA + (6S)-5,6,7,8-tetrahydrofolate + NADP(+). Its function is as follows. Catalyzes the folate-dependent formation of 5-methyl-uridine at position 54 (M-5-U54) in all tRNAs. In Bdellovibrio bacteriovorus (strain ATCC 15356 / DSM 50701 / NCIMB 9529 / HD100), this protein is Methylenetetrahydrofolate--tRNA-(uracil-5-)-methyltransferase TrmFO.